Consider the following 355-residue polypeptide: uncharacterized protein (355 aa).

This sequence belongs to the ycf89 family.

The protein resides in the plastid. It is found in the chloroplast. This is an uncharacterized protein from Trieres chinensis (Marine centric diatom).